Reading from the N-terminus, the 204-residue chain is Tetraspanin-13 (204 aa).

Over 1-19 the chain is Cytoplasmic; it reads MVCGGFSCSKNCLCALNLL. A helical membrane pass occupies residues 20 to 40; sequence YTLVSLLLIGIAAWGIGFGLI. At 41-44 the chain is on the extracellular side; that stretch reads SSLR. A helical membrane pass occupies residues 45 to 65; that stretch reads VVGVVIAVGIFLFLIALVGLI. At 66 to 72 the chain is on the cytoplasmic side; sequence GAVKHHQ. The helical transmembrane segment at 73-93 threads the bilayer; it reads VLLFFYMIILLLVFIVQFSVS. The Extracellular portion of the chain corresponds to 94 to 167; sequence CACLALNREQ…IGEYAGEVLR (74 aa). N-linked (GlcNAc...) asparagine glycosylation is found at Asn-113 and Asn-137. Ser-143 bears the Phosphoserine mark. The chain crosses the membrane as a helical span at residues 168 to 188; that stretch reads FVGGIGLFFSFTEILGVWLTY. Residues 189–204 lie on the Cytoplasmic side of the membrane; it reads RYRNQKDPRANPSAFL.

The protein belongs to the tetraspanin (TM4SF) family.

It is found in the membrane. This chain is Tetraspanin-13 (Tspan13), found in Mus musculus (Mouse).